An 84-amino-acid polypeptide reads, in one-letter code: MLGINVKKTKEELIISWQLAKITIPLRDVIEVTEDATYAGVEDTSAIRIGTAYGTTDRILIKTVKQNYVLFTTNKVSILNAINA.

It belongs to the UPF0457 family.

The protein is UPF0457 protein BT9727_2307 of Bacillus thuringiensis subsp. konkukian (strain 97-27).